The chain runs to 258 residues: Aspartate/glutamate leucyltransferase (258 aa).

Belongs to the R-transferase family. Bpt subfamily.

It is found in the cytoplasm. It catalyses the reaction N-terminal L-glutamyl-[protein] + L-leucyl-tRNA(Leu) = N-terminal L-leucyl-L-glutamyl-[protein] + tRNA(Leu) + H(+). The enzyme catalyses N-terminal L-aspartyl-[protein] + L-leucyl-tRNA(Leu) = N-terminal L-leucyl-L-aspartyl-[protein] + tRNA(Leu) + H(+). In terms of biological role, functions in the N-end rule pathway of protein degradation where it conjugates Leu from its aminoacyl-tRNA to the N-termini of proteins containing an N-terminal aspartate or glutamate. The polypeptide is Aspartate/glutamate leucyltransferase (Rhizobium etli (strain ATCC 51251 / DSM 11541 / JCM 21823 / NBRC 15573 / CFN 42)).